Consider the following 703-residue polypeptide: Fatty acid oxidation complex subunit alpha (703 aa).

The tract at residues 1-190 (MSEQKAFSLN…KLGVVDACVP (190 aa)) is enoyl-CoA hydratase. A 3-hydroxyacyl-CoA dehydrogenase region spans residues 308–703 (AAVKKVGVLG…TRAGEGRTFY (396 aa)).

It in the N-terminal section; belongs to the enoyl-CoA hydratase/isomerase family. This sequence in the central section; belongs to the 3-hydroxyacyl-CoA dehydrogenase family. As to quaternary structure, heterotetramer of two alpha chains (FadJ) and two beta chains (FadI).

The protein resides in the cytoplasm. It catalyses the reaction a (3S)-3-hydroxyacyl-CoA = a (2E)-enoyl-CoA + H2O. It carries out the reaction a 4-saturated-(3S)-3-hydroxyacyl-CoA = a (3E)-enoyl-CoA + H2O. The enzyme catalyses a (3S)-3-hydroxyacyl-CoA + NAD(+) = a 3-oxoacyl-CoA + NADH + H(+). The catalysed reaction is (3S)-3-hydroxybutanoyl-CoA = (3R)-3-hydroxybutanoyl-CoA. It participates in lipid metabolism; fatty acid beta-oxidation. Functionally, catalyzes the formation of a hydroxyacyl-CoA by addition of water on enoyl-CoA. Also exhibits 3-hydroxyacyl-CoA epimerase and 3-hydroxyacyl-CoA dehydrogenase activities. This chain is Fatty acid oxidation complex subunit alpha, found in Vibrio parahaemolyticus serotype O3:K6 (strain RIMD 2210633).